Reading from the N-terminus, the 158-residue chain is Aspartate carbamoyltransferase regulatory chain (158 aa).

Residues Cys-111, Cys-116, Cys-140, and Cys-143 each coordinate Zn(2+).

This sequence belongs to the PyrI family. In terms of assembly, contains catalytic and regulatory chains. Zn(2+) is required as a cofactor.

Its function is as follows. Involved in allosteric regulation of aspartate carbamoyltransferase. This chain is Aspartate carbamoyltransferase regulatory chain, found in Metallosphaera sedula (strain ATCC 51363 / DSM 5348 / JCM 9185 / NBRC 15509 / TH2).